The primary structure comprises 1278 residues: Mediator of RNA polymerase II transcription subunit 16 (1278 aa).

A compositionally biased stretch (acidic residues) spans 1–10 (MNQQNPEEEV). Disordered regions lie at residues 1–21 (MNQQNPEEEVSLVNNSGGGGI), 530–557 (TKDFKNHQVAAAGPSVDAPKEPDSGDEK), and 839–861 (SAGTGSNRNNVTSPTQNASSPAT). Over residues 547–557 (APKEPDSGDEK) the composition is skewed to basic and acidic residues. Over residues 841-861 (GTGSNRNNVTSPTQNASSPAT) the composition is skewed to polar residues.

It belongs to the plant Mediator complex subunit 16 family. In terms of assembly, component of the Mediator complex.

It is found in the nucleus. Its function is as follows. Component of the Mediator complex, a coactivator involved in the regulated transcription of nearly all RNA polymerase II-dependent genes. Mediator functions as a bridge to convey information from gene-specific regulatory proteins to the basal RNA polymerase II transcription machinery. The Mediator complex, having a compact conformation in its free form, is recruited to promoters by direct interactions with regulatory proteins and serves for the assembly of a functional preinitiation complex with RNA polymerase II and the general transcription factors. Involved in the regulation of the circadian clock, in the control of flowering time, in freezing- and osmotic-stress tolerance and in both salicylic acid- and jasmonate-mediated defense gene expression. In Arabidopsis thaliana (Mouse-ear cress), this protein is Mediator of RNA polymerase II transcription subunit 16 (MED16).